Consider the following 716-residue polypeptide: Tensin-4 (716 aa).

A signal peptide spans 1–17; the sequence is MSQVMSSPLLAGGPAVG. Disordered regions lie at residues 119-274, 301-322, 334-366, and 379-436; these read LPPG…VSML, QSSS…NLGP, VPSN…PSIT, and GFPE…RDMQ. Residues 138–150 show a composition bias toward basic and acidic residues; the sequence is KKKEEPEALDIKY. Polar residues predominate over residues 197-206; the sequence is SSESLIFSGS. The segment covering 214-228 has biased composition (pro residues); it reads PAPPSAVPSSHPPTS. Position 248 is a phosphoserine (Ser248). Positions 265–274 are enriched in polar residues; the sequence is PQLSSRVSML. The segment covering 402-419 has biased composition (polar residues); it reads ATSSSMPCPATRSHSQTL. In terms of domain architecture, SH2 spans 449–556; that stretch reads WFKPSISREQ…ALPCKLVIPQ (108 aa). A PTB domain is found at 583 to 704; that stretch reads CHALYLSSVS…TLQPASQVIR (122 aa).

The protein belongs to the PTEN phosphatase protein family. Interacts (via SH2 domain) with Rho GTPase-activating protein DLC1 (via C-terminus); the interaction is independent of DLC1 tyrosine phosphorylation. Interacts with integrin ITGB1; the interaction displaces tensin TNS3 from the ITGB1 cytoplasmic tail and promotes ITGB1 stability. Interacts (via SH2 domain) with E3 ubiquitin-protein ligase CBL (phosphorylated on 'Tyr-782'); the interaction is enhanced in the presence of EGF and reduces interaction of CBL with EGFR. Interacts (via SH2 domain) with receptor tyrosine kinase MET (when phosphorylated); the interaction increases MET protein stability.

The protein resides in the cell junction. It is found in the focal adhesion. It localises to the cytoplasm. The protein localises to the cytoskeleton. Functionally, promotes EGF-induced cell migration by displacing tensin TNS3 from the cytoplasmic tail of integrin ITGB1 which results in dissociation of TNS3 from focal adhesions, disassembly of actin stress fibers and initiation of cell migration. Suppresses ligand-induced degradation of EGFR by reducing EGFR ubiquitination in the presence of EGF. Increases MET protein stability by inhibiting MET endocytosis and subsequent lysosomal degradation which leads to increased cell survival, proliferation and migration. This is Tensin-4 (TNS4) from Bos taurus (Bovine).